A 463-amino-acid chain; its full sequence is ATP synthase subunit beta 1 (463 aa).

Position 152-159 (152-159) interacts with ATP; that stretch reads GGAGVGKT.

It belongs to the ATPase alpha/beta chains family. F-type ATPases have 2 components, CF(1) - the catalytic core - and CF(0) - the membrane proton channel. CF(1) has five subunits: alpha(3), beta(3), gamma(1), delta(1), epsilon(1). CF(0) has three main subunits: a(1), b(2) and c(9-12). The alpha and beta chains form an alternating ring which encloses part of the gamma chain. CF(1) is attached to CF(0) by a central stalk formed by the gamma and epsilon chains, while a peripheral stalk is formed by the delta and b chains.

The protein resides in the cell inner membrane. It catalyses the reaction ATP + H2O + 4 H(+)(in) = ADP + phosphate + 5 H(+)(out). Produces ATP from ADP in the presence of a proton gradient across the membrane. The catalytic sites are hosted primarily by the beta subunits. The protein is ATP synthase subunit beta 1 of Shewanella frigidimarina (strain NCIMB 400).